The following is a 721-amino-acid chain: Sodium/hydrogen exchanger 6 (721 aa).

Residues 1-44 (MTSPKPWARSAGSCQTQRAVRTRKKECREEGESDTEKGPAASSA) form a disordered region. The segment covering 26–37 (ECREEGESDTEK) has biased composition (basic and acidic residues). The next 12 membrane-spanning stretches (helical) occupy residues 91–111 (SANLLIFILLLTLTILTIWLF), 123–143 (GLAMIYGLLVGLVLRYGIHVP), 196–216 (VTFDPEVFFNILLPPIIFYAG), 231–251 (ILAYAFLGTAISCFVIGSIMY), 272–292 (CLLFGAIVSATDPVTVLAIFH), 298–318 (VELYALLFGESVLNDAVAIVL), 344–364 (IGIFLGIFSGSFAMGAATGVV), 388–412 (MSWSTFLLAEAWGFTGVVAVLFCGI), 434–454 (FELLNFLAENFIFSYMGLTLF), 456–476 (FQNHVFNPTFVVGAFIAIFLG), 499–519 (NFQHMMMFAGLRGAMAFALAI), and 535–555 (LLIVFFTVWVFGGGTTAMLSC).

This sequence belongs to the monovalent cation:proton antiporter 1 (CPA1) transporter (TC 2.A.36) family. Homodimer. Interacts with RACK1; regulates the distribution of SLC9A6 between endosomes and the plasma membrane. Post-translationally, ubiquitinated (in vitro). In terms of processing, glycosylated.

It localises to the endosome membrane. The protein resides in the recycling endosome membrane. Its subcellular location is the early endosome membrane. It is found in the late endosome membrane. The protein localises to the cell membrane. The catalysed reaction is Na(+)(in) + H(+)(out) = Na(+)(out) + H(+)(in). The enzyme catalyses K(+)(in) + H(+)(out) = K(+)(out) + H(+)(in). In terms of biological role, endosomal Na(+), K(+)/H(+) antiporter. Mediates the electroneutral exchange of endosomal luminal H(+) for a cytosolic Na(+) or K(+). By facilitating proton efflux, SLC9A6 counteracts the acidity generated by vacuolar (V)-ATPase, thereby limiting luminal acidification. Responsible for alkalizing and maintaining the endosomal pH, and consequently in, e.g., endosome maturation and trafficking of recycling endosomal cargo. Plays a critical role during neurodevelopment by regulating synaptic development and plasticity. Implicated in the maintenance of cell polarity in a manner that is dependent on its ability to modulate intravesicular pH. Regulates intracelular pH in some specialized cells, osteoclasts and stereocilia where this transporter localizes to the plasma membrane. The chain is Sodium/hydrogen exchanger 6 from Rattus norvegicus (Rat).